Here is a 337-residue protein sequence, read N- to C-terminus: Cell-surface associated glycoprotein DFI1 (337 aa).

Residues 1–21 (MEKLSINNNNNNRRYQSRRFD) lie on the Cytoplasmic side of the membrane. Residues 22–42 (GITIIRIVVLVFIVTVSTYFV) traverse the membrane as a helical segment. The Extracellular segment spans residues 43 to 269 (NSYTCNQPHH…NGGGLSHTNR (227 aa)). Residues Asn-53, Asn-65, Asn-87, and Asn-100 are each glycosylated (N-linked (GlcNAc...) asparagine). 2 stretches are compositionally biased toward low complexity: residues 124-220 (SSTF…TSAS) and 241-259 (SVIS…KNND). Disordered regions lie at residues 124 to 224 (SSTF…QHVT) and 241 to 265 (SVIS…GGLS). Residues 270–290 (IVVGVVVGVGGSILIGLLAVL) form a helical membrane-spanning segment. The short motif at 273–277 (GVVVG) is the Glycophorin A element. The Cytoplasmic segment spans residues 291–337 (FYLRKRNNRDYEGGWTFWRKNEKLGSDEFFNGELGVRDRNINQGSNF). Residues 301–314 (YEGGWTFWRKNEKL) carry the Calmodulin-binding motif.

This sequence belongs to the MID2 like cell wall stress sensor family. Post-translationally, cross-linked to the carbohydrate polymers of the cell wall. In terms of processing, O-glycosylated by MNT1 and MNT2. Also N-glycosylated.

Its subcellular location is the cell membrane. It is found in the cell septum. The protein resides in the secreted. The protein localises to the cell wall. Its function is as follows. Cell-surface associated glycoprotein that acts as a plasma membrane receptor-type protein which senses the presence of matrix. Binds to calmodulin in response to environmental conditions and initiates a signaling cascade that activates CEK1, thus promoting invasive filamentation. Involved in the maintenance of the cell wall. In Candida albicans (strain SC5314 / ATCC MYA-2876) (Yeast), this protein is Cell-surface associated glycoprotein DFI1.